A 384-amino-acid polypeptide reads, in one-letter code: MAFHFRRLCFFSALLAVVLQLLHGVSGQLVVVEEPISAPPPPLVDLNTGDGIVPALFVFGDSLIDNGNNNNIPSFAKANYFPYGIDFNGGPTGRFCNGLTMVDGIAQLLGLPLIPAYSEATGDQVLRGVNYASAAAGILPDTGGNFVGRIPFDQQIHNFETTLDQVASKSGGAVAIADSVTRSLFFIGMGSNDYLNNYLMPNFPTRNQYNSQQFGDLLVQHYTDQLTRLYNLGGRKFVVAGLGRMGCIPSILAQGNDGKCSEEVNQLVLPFNTNVKTMISNLNQNLPDAKFIYLDIAHMFEDIVANQAAYGLTTMDKGCCGIGKNRGQITCLPFETPCPNRDQYVFWDAFHPTEKVNLIMAKKAFAGDRTVAYPINIQQLASLN.

The first 27 residues, 1–27, serve as a signal peptide directing secretion; the sequence is MAFHFRRLCFFSALLAVVLQLLHGVSG. Residue Ser-62 is the Nucleophile of the active site. Catalysis depends on residues Asp-348 and His-351.

The protein belongs to the 'GDSL' lipolytic enzyme family.

Its subcellular location is the secreted. This Arabidopsis thaliana (Mouse-ear cress) protein is GDSL esterase/lipase At1g71691.